Reading from the N-terminus, the 206-residue chain is Large ribosomal subunit protein uL4 (206 aa).

The protein belongs to the universal ribosomal protein uL4 family. In terms of assembly, part of the 50S ribosomal subunit.

Its function is as follows. One of the primary rRNA binding proteins, this protein initially binds near the 5'-end of the 23S rRNA. It is important during the early stages of 50S assembly. It makes multiple contacts with different domains of the 23S rRNA in the assembled 50S subunit and ribosome. Forms part of the polypeptide exit tunnel. This Nitrobacter winogradskyi (strain ATCC 25391 / DSM 10237 / CIP 104748 / NCIMB 11846 / Nb-255) protein is Large ribosomal subunit protein uL4.